The sequence spans 125 residues: Protein ApaG (125 aa).

In terms of domain architecture, ApaG spans 1–125 (MFTSSKVAIQ…FRLAIPTLIN (125 aa)).

The chain is Protein ApaG from Proteus mirabilis (strain HI4320).